Consider the following 119-residue polypeptide: Protein TusC (119 aa).

This sequence belongs to the DsrF/TusC family. As to quaternary structure, heterohexamer, formed by a dimer of trimers. The hexameric TusBCD complex contains 2 copies each of TusB, TusC and TusD. The TusBCD complex interacts with TusE.

It localises to the cytoplasm. Its function is as follows. Part of a sulfur-relay system required for 2-thiolation of 5-methylaminomethyl-2-thiouridine (mnm(5)s(2)U) at tRNA wobble positions. The sequence is that of Protein TusC from Cronobacter sakazakii (strain ATCC BAA-894) (Enterobacter sakazakii).